The following is a 325-amino-acid chain: Bifunctional nuclease 2 (325 aa).

In terms of domain architecture, BFN spans Cys119 to Ser254. One can recognise a UVR domain in the interval Glu285–Lys320.

This sequence belongs to the bifunctional nuclease family.

It localises to the nucleus. Its function is as follows. Bifunctional nuclease with both RNase and DNase activities. Involved in basal defense response. Participates in abscisic acid-derived callose deposition following infection by a necrotrophic pathogen. The sequence is that of Bifunctional nuclease 2 (BBD2) from Oryza sativa subsp. japonica (Rice).